A 216-amino-acid chain; its full sequence is UPF0323 lipoprotein HPG27_212 (216 aa).

Residues 1 to 27 (MKKPYRKISDYAIVGGLSALVMVSIVG) form the signal peptide. Cysteine 28 carries N-palmitoyl cysteine lipidation. The S-diacylglycerol cysteine moiety is linked to residue cysteine 28. Residues 159-170 (QRTYKSPQAYQR) show a composition bias toward polar residues. A disordered region spans residues 159 to 216 (QRTYKSPQAYQRSQNSFSKSAPSASSMGGASKGQSGFFGSSRPTSSPAVSSGTRGFNS). Low complexity predominate over residues 171 to 209 (SQNSFSKSAPSASSMGGASKGQSGFFGSSRPTSSPAVSS).

This sequence belongs to the UPF0323 family.

The protein localises to the cell membrane. The sequence is that of UPF0323 lipoprotein HPG27_212 from Helicobacter pylori (strain G27).